Consider the following 156-residue polypeptide: MKKESIYLTKEGYEKLKAELDQLKQKLMFEIAQRIKEARELGDLSENSEYQEAKNEQGRIAARINELENMLSKAEVIEGLDTNVINIGNWVLIKNLDTGEEKTIQIVTPHEADVFNNKISFESPIGRVLVGKKVGEVVKIKAPKGVFKYQILGIKI.

A coiled-coil region spans residues 6-75 (IYLTKEGYEK…ELENMLSKAE (70 aa)).

Belongs to the GreA/GreB family.

Functionally, necessary for efficient RNA polymerase transcription elongation past template-encoded arresting sites. The arresting sites in DNA have the property of trapping a certain fraction of elongating RNA polymerases that pass through, resulting in locked ternary complexes. Cleavage of the nascent transcript by cleavage factors such as GreA or GreB allows the resumption of elongation from the new 3'terminus. GreA releases sequences of 2 to 3 nucleotides. This chain is Transcription elongation factor GreA, found in Thermosipho africanus (strain TCF52B).